Here is a 511-residue protein sequence, read N- to C-terminus: GMP synthase [glutamine-hydrolyzing] (511 aa).

A Glutamine amidotransferase type-1 domain is found at 5–195 (MILVLDFGGQ…LYNICGCKGD (191 aa)). The active-site Nucleophile is the C82. Residues H169 and E171 contribute to the active site. One can recognise a GMPS ATP-PPase domain in the interval 196–386 (WKMSSFVENS…LGIPEDLVWR (191 aa)). Position 223–229 (223–229 (SGGVDSS)) interacts with ATP.

As to quaternary structure, homodimer.

The enzyme catalyses XMP + L-glutamine + ATP + H2O = GMP + L-glutamate + AMP + diphosphate + 2 H(+). It participates in purine metabolism; GMP biosynthesis; GMP from XMP (L-Gln route): step 1/1. In terms of biological role, catalyzes the synthesis of GMP from XMP. This Ruminiclostridium cellulolyticum (strain ATCC 35319 / DSM 5812 / JCM 6584 / H10) (Clostridium cellulolyticum) protein is GMP synthase [glutamine-hydrolyzing].